The primary structure comprises 189 residues: Adenylate kinase (189 aa).

ATP is bound at residue 10 to 15 (AAGKGT). Residues 30–59 (STGDMLRAARASGSELGQRVAKIMDEGGLV) form an NMP region. AMP-binding positions include Thr-31, Arg-36, 57–59 (GLV), 85–88 (GFPR), and Gln-92. Positions 126–136 (KRFEEQGRADD) are LID. Residue Arg-127 participates in ATP binding. The AMP site is built by Arg-133 and Arg-144. Gly-172 contributes to the ATP binding site.

The protein belongs to the adenylate kinase family. In terms of assembly, monomer.

The protein resides in the cytoplasm. The catalysed reaction is AMP + ATP = 2 ADP. It functions in the pathway purine metabolism; AMP biosynthesis via salvage pathway; AMP from ADP: step 1/1. In terms of biological role, catalyzes the reversible transfer of the terminal phosphate group between ATP and AMP. Plays an important role in cellular energy homeostasis and in adenine nucleotide metabolism. This Hyphomonas neptunium (strain ATCC 15444) protein is Adenylate kinase.